The primary structure comprises 944 residues: Isoleucine--tRNA ligase (944 aa).

Positions 58 to 68 (PYANGQIHIGH) match the 'HIGH' region motif. Residue Glu568 coordinates L-isoleucyl-5'-AMP. The short motif at 609 to 613 (KMSKS) is the 'KMSKS' region element. Lys612 serves as a coordination point for ATP. Zn(2+)-binding residues include Cys907, Cys910, Cys927, and Cys930.

This sequence belongs to the class-I aminoacyl-tRNA synthetase family. IleS type 1 subfamily. As to quaternary structure, monomer. Zn(2+) is required as a cofactor.

It localises to the cytoplasm. The enzyme catalyses tRNA(Ile) + L-isoleucine + ATP = L-isoleucyl-tRNA(Ile) + AMP + diphosphate. Functionally, catalyzes the attachment of isoleucine to tRNA(Ile). As IleRS can inadvertently accommodate and process structurally similar amino acids such as valine, to avoid such errors it has two additional distinct tRNA(Ile)-dependent editing activities. One activity is designated as 'pretransfer' editing and involves the hydrolysis of activated Val-AMP. The other activity is designated 'posttransfer' editing and involves deacylation of mischarged Val-tRNA(Ile). This Idiomarina loihiensis (strain ATCC BAA-735 / DSM 15497 / L2-TR) protein is Isoleucine--tRNA ligase.